Consider the following 106-residue polypeptide: ATP-dependent Clp protease adapter protein ClpS (106 aa).

This sequence belongs to the ClpS family. Binds to the N-terminal domain of the chaperone ClpA.

Involved in the modulation of the specificity of the ClpAP-mediated ATP-dependent protein degradation. This is ATP-dependent Clp protease adapter protein ClpS from Vibrio cholerae serotype O1 (strain ATCC 39541 / Classical Ogawa 395 / O395).